A 97-amino-acid polypeptide reads, in one-letter code: Large ribosomal subunit protein bL27 (97 aa).

The tract at residues 1–23 is disordered; the sequence is MAHKKGASSSRNGRDSTSKRLGV.

This sequence belongs to the bacterial ribosomal protein bL27 family.

The chain is Large ribosomal subunit protein bL27 from Acidothermus cellulolyticus (strain ATCC 43068 / DSM 8971 / 11B).